A 164-amino-acid chain; its full sequence is FMN reductase (NADH) RutF (164 aa).

Belongs to the non-flavoprotein flavin reductase family. RutF subfamily.

It carries out the reaction FMNH2 + NAD(+) = FMN + NADH + 2 H(+). In terms of biological role, catalyzes the reduction of FMN to FMNH2 which is used to reduce pyrimidine by RutA via the Rut pathway. This is FMN reductase (NADH) RutF from Escherichia coli O6:K15:H31 (strain 536 / UPEC).